The sequence spans 346 residues: MSTRLIIPANFSYDDPLPFTCNQDSHVMLSILEYLVQATYLSVSAVLNSMIVYTIFRCKGKHSYRRNPFFVLYAAEAVMNVYSCVIEVLFGRLIIYMTPLCPALSPFFFTPSILTKLYFLLNHYCLAFKTLSQIAISFNRMTCVIFPVHHFKLWQNILAPVLVSLFVLPLGVTWNILVSRVYVNPNGAGFSVNYRDAVAWANISFLHLFHCIPCLFLMIVFFLASIFGLTMLENRLRSAERSLIIFTMTLGVETMLFAIAQIYFAFLAGYLPGIRPLMLLISFNVFDVLYVYSPIALILMNRQLRRDIFHLKGDDPGFGFTKFPVILVEMISDSSPHLLIINLQLV.

The next 7 membrane-spanning stretches (helical) occupy residues 27 to 47, 69 to 89, 106 to 128, 157 to 177, 212 to 232, 254 to 274, and 279 to 299; these read VMLSILEYLVQATYLSVSAVL, FFVLYAAEAVMNVYSCVIEVL, PFFFTPSILTKLYFLLNHYCLAF, ILAPVLVSLFVLPLGVTWNIL, IPCLFLMIVFFLASIFGLTML, TMLFAIAQIYFAFLAGYLPGI, and LLISFNVFDVLYVYSPIALIL.

Belongs to the nematode receptor-like protein srg family.

Its subcellular location is the membrane. This is Serpentine receptor class gamma-20 (srg-20) from Caenorhabditis elegans.